A 251-amino-acid chain; its full sequence is Vitamin B12 import ATP-binding protein BtuD (251 aa).

Residues 2–236 (IRVNSLQVDS…EVLQSVFGTS (235 aa)) form the ABC transporter domain. 30–37 (GPNGCGKS) provides a ligand contact to ATP.

This sequence belongs to the ABC transporter superfamily. Vitamin B12 importer (TC 3.A.1.13.1) family. In terms of assembly, the complex is composed of two ATP-binding proteins (BtuD), two transmembrane proteins (BtuC) and a solute-binding protein (BtuF).

The protein resides in the cell inner membrane. The enzyme catalyses an R-cob(III)alamin(out) + ATP + H2O = an R-cob(III)alamin(in) + ADP + phosphate + H(+). Part of the ABC transporter complex BtuCDF involved in vitamin B12 import. Responsible for energy coupling to the transport system. The protein is Vitamin B12 import ATP-binding protein BtuD of Vibrio cholerae serotype O1 (strain ATCC 39315 / El Tor Inaba N16961).